The sequence spans 156 residues: Snaclec A2 (156 aa).

An N-terminal signal peptide occupies residues 1–23 (MGRLISVSFGLLVVFLSLSGTGA). 3 cysteine pairs are disulfide-bonded: C27–C38, C55–C154, and C129–C146. The C-type lectin domain occupies 34 to 155 (HEGHCYKVFN…CGQPYRFTCE (122 aa)).

Belongs to the snaclec family. Heterodimer; disulfide-linked. In terms of tissue distribution, expressed by the venom gland.

The protein localises to the secreted. Interferes with one step of hemostasis (modulation of platelet aggregation, or coagulation cascade, for example). The sequence is that of Snaclec A2 from Macrovipera lebetinus (Levantine viper).